The following is a 143-amino-acid chain: Large ribosomal subunit protein uL13 (143 aa).

It belongs to the universal ribosomal protein uL13 family. In terms of assembly, part of the 50S ribosomal subunit.

In terms of biological role, this protein is one of the early assembly proteins of the 50S ribosomal subunit, although it is not seen to bind rRNA by itself. It is important during the early stages of 50S assembly. This Carboxydothermus hydrogenoformans (strain ATCC BAA-161 / DSM 6008 / Z-2901) protein is Large ribosomal subunit protein uL13.